Reading from the N-terminus, the 295-residue chain is 4-hydroxy-tetrahydrodipicolinate synthase (295 aa).

Thr47 lines the pyruvate pocket. Catalysis depends on Tyr135, which acts as the Proton donor/acceptor. The active-site Schiff-base intermediate with substrate is the Lys163. Position 206 (Ile206) interacts with pyruvate.

In terms of assembly, homodimer. In fact, exists in a monomer-dimer equilibrium in solution, shifted in favor of the dimer in presence of the substrate pyruvate; the monomer has significantly reduced activity compared with the dimer.

The protein localises to the cytoplasm. The enzyme catalyses L-aspartate 4-semialdehyde + pyruvate = (2S,4S)-4-hydroxy-2,3,4,5-tetrahydrodipicolinate + H2O + H(+). The protein operates within amino-acid biosynthesis; L-lysine biosynthesis via DAP pathway; (S)-tetrahydrodipicolinate from L-aspartate: step 3/4. With respect to regulation, is insensitive to lysine-feedback inhibition. Shows ASA substrate inhibition. In terms of biological role, catalyzes the condensation of (S)-aspartate-beta-semialdehyde [(S)-ASA] and pyruvate to 4-hydroxy-tetrahydrodipicolinate (HTPA). This Staphylococcus aureus (strain MRSA252) protein is 4-hydroxy-tetrahydrodipicolinate synthase.